The primary structure comprises 145 residues: Toxin coregulated pilus biosynthesis protein H (145 aa).

Involved in TCP pilus biogenesis. The chain is Toxin coregulated pilus biosynthesis protein H (tcpH) from Vibrio cholerae serotype O1 (strain ATCC 39315 / El Tor Inaba N16961).